Reading from the N-terminus, the 400-residue chain is Nicotinate phosphoribosyltransferase (400 aa).

Histidine 220 carries the phosphohistidine; by autocatalysis modification.

The protein belongs to the NAPRTase family. Post-translationally, transiently phosphorylated on a His residue during the reaction cycle. Phosphorylation strongly increases the affinity for substrates and increases the rate of nicotinate D-ribonucleotide production. Dephosphorylation regenerates the low-affinity form of the enzyme, leading to product release.

It catalyses the reaction nicotinate + 5-phospho-alpha-D-ribose 1-diphosphate + ATP + H2O = nicotinate beta-D-ribonucleotide + ADP + phosphate + diphosphate. It participates in cofactor biosynthesis; NAD(+) biosynthesis; nicotinate D-ribonucleotide from nicotinate: step 1/1. Functionally, catalyzes the synthesis of beta-nicotinate D-ribonucleotide from nicotinate and 5-phospho-D-ribose 1-phosphate at the expense of ATP. This Escherichia coli (strain K12 / MC4100 / BW2952) protein is Nicotinate phosphoribosyltransferase.